A 375-amino-acid polypeptide reads, in one-letter code: MDALRLANSAFAVELFKQLCEKEPAGNILFSPICLSTSLSLAQVGAKGDTANEIGQVLHFENVKDVPFGFKPITSDVNKLSSFYSLKLIKRLYIDKSLNLSTEFISSTKRPYANELETVDFKDKLEETKGQINSSIKELTDGHFEDILPENSISDQTKILVVNAAYFVGKWMKKFPESETKECPFRINKTDTKPVQMMNLEATFCLGNIDDINCKIIELPFQNKHLSMLIVLPKDVEDESTGLEKIEKQLNPETLLQWTNPSTMANAKVKLSLPKFKVEKMIDPKASLESLGLKSLFNESTSDFSGMSETKGVSVSNVIHRVCLEITEDGGDSIEVPGSRILQHKDEFKADHPFLFIVRHNKTRNIVFLGKFSSP.

Residues Asn-99, Asn-133, Asn-188, Asn-298, and Asn-361 are each glycosylated (N-linked (GlcNAc...) asparagine).

It belongs to the serpin family. Ov-serpin subfamily. In terms of assembly, interacts with IRF6.

The protein localises to the secreted. It is found in the extracellular space. Functionally, tumor suppressor. It blocks the growth, invasion, and metastatic properties of mammary tumors. As it does not undergo the S (stressed) to R (relaxed) conformational transition characteristic of active serpins, it exhibits no serine protease inhibitory activity. This chain is Serpin B5 (Serpinb5), found in Rattus norvegicus (Rat).